A 215-amino-acid chain; its full sequence is Cytochrome b6 (215 aa).

Residues 32–52 (IFYCLGGIVFVSFLIQVATGF) traverse the membrane as a helical segment. Cysteine 35 is a heme c binding site. Histidine 86 and histidine 100 together coordinate heme b. 3 consecutive transmembrane segments (helical) span residues 90 to 110 (VSMMVLMMILHVFRVYLTGGF), 116 to 136 (LTWVTGVILGVLTVSFGVTGY), and 186 to 206 (LHTFVLPLLTAVFMLMHFLMI). Histidine 187 and histidine 202 together coordinate heme b.

This sequence belongs to the cytochrome b family. PetB subfamily. The 4 large subunits of the cytochrome b6-f complex are cytochrome b6, subunit IV (17 kDa polypeptide, PetD), cytochrome f and the Rieske protein, while the 4 small subunits are PetG, PetL, PetM and PetN. The complex functions as a dimer. Heme b serves as cofactor. Heme c is required as a cofactor.

The protein localises to the plastid. The protein resides in the chloroplast thylakoid membrane. In terms of biological role, component of the cytochrome b6-f complex, which mediates electron transfer between photosystem II (PSII) and photosystem I (PSI), cyclic electron flow around PSI, and state transitions. This chain is Cytochrome b6, found in Pyropia yezoensis (Susabi-nori).